The sequence spans 160 residues: S-ribosylhomocysteine lyase (160 aa).

Fe cation-binding residues include H57, H61, and C127.

The protein belongs to the LuxS family. As to quaternary structure, homodimer. The cofactor is Fe cation.

It catalyses the reaction S-(5-deoxy-D-ribos-5-yl)-L-homocysteine = (S)-4,5-dihydroxypentane-2,3-dione + L-homocysteine. Its function is as follows. Involved in the synthesis of autoinducer 2 (AI-2) which is secreted by bacteria and is used to communicate both the cell density and the metabolic potential of the environment. The regulation of gene expression in response to changes in cell density is called quorum sensing. Catalyzes the transformation of S-ribosylhomocysteine (RHC) to homocysteine (HC) and 4,5-dihydroxy-2,3-pentadione (DPD). The polypeptide is S-ribosylhomocysteine lyase (Streptococcus gordonii (strain Challis / ATCC 35105 / BCRC 15272 / CH1 / DL1 / V288)).